Reading from the N-terminus, the 625-residue chain is 1-deoxy-D-xylulose-5-phosphate synthase (625 aa).

Thiamine diphosphate-binding positions include His-74 and 115–117 (GHS). Asp-146 serves as a coordination point for Mg(2+). Thiamine diphosphate is bound by residues 147 to 148 (GA), Asn-175, Tyr-286, and Glu-367. Asn-175 lines the Mg(2+) pocket.

The protein belongs to the transketolase family. DXPS subfamily. Homodimer. Mg(2+) is required as a cofactor. Requires thiamine diphosphate as cofactor.

The catalysed reaction is D-glyceraldehyde 3-phosphate + pyruvate + H(+) = 1-deoxy-D-xylulose 5-phosphate + CO2. Its pathway is metabolic intermediate biosynthesis; 1-deoxy-D-xylulose 5-phosphate biosynthesis; 1-deoxy-D-xylulose 5-phosphate from D-glyceraldehyde 3-phosphate and pyruvate: step 1/1. Its function is as follows. Catalyzes the acyloin condensation reaction between C atoms 2 and 3 of pyruvate and glyceraldehyde 3-phosphate to yield 1-deoxy-D-xylulose-5-phosphate (DXP). In Lachnoclostridium phytofermentans (strain ATCC 700394 / DSM 18823 / ISDg) (Clostridium phytofermentans), this protein is 1-deoxy-D-xylulose-5-phosphate synthase.